The chain runs to 75 residues: Small ribosomal subunit protein bS18 (75 aa).

Belongs to the bacterial ribosomal protein bS18 family. In terms of assembly, part of the 30S ribosomal subunit. Forms a tight heterodimer with protein bS6.

In terms of biological role, binds as a heterodimer with protein bS6 to the central domain of the 16S rRNA, where it helps stabilize the platform of the 30S subunit. This chain is Small ribosomal subunit protein bS18, found in Colwellia psychrerythraea (strain 34H / ATCC BAA-681) (Vibrio psychroerythus).